Consider the following 373-residue polypeptide: Arabinonate dehydratase (373 aa).

The Mg(2+) site is built by aspartate 199, glutamate 225, and glutamate 251.

Belongs to the mandelate racemase/muconate lactonizing enzyme family. In terms of assembly, homooctamer. The cofactor is Mg(2+).

The enzyme catalyses D-arabinonate = 2-dehydro-3-deoxy-D-arabinonate + H2O. With respect to regulation, inhibited by substrate levels above 8 mM. In terms of biological role, catalyzes the dehydration of D-arabinonate to 2-keto-3-deoxy-D-arabinonate. Participates in a pentose oxidation pathway that converts D-arabinonate to 2-oxoglutarate. In Saccharolobus solfataricus (strain ATCC 35092 / DSM 1617 / JCM 11322 / P2) (Sulfolobus solfataricus), this protein is Arabinonate dehydratase.